Reading from the N-terminus, the 389-residue chain is Putative cyclin-F3-1 (389 aa).

Residues 1–103 are disordered; sequence MEAAAAAAAE…GAAGGSRQPV (103 aa). Residues 19–43 show a composition bias toward low complexity; sequence VEGAAVAAVAPEAAAEGPSEPNAGE.

Belongs to the cyclin family. Cyclin F subfamily.

The sequence is that of Putative cyclin-F3-1 (CYCF3-1) from Oryza sativa subsp. japonica (Rice).